We begin with the raw amino-acid sequence, 558 residues long: Scarecrow-like protein 6 (558 aa).

A disordered region spans residues 19-90 (FSSSFPQPPS…GGDATTDEQC (72 aa)). Residues 54 to 75 (SVLDSLISPTSSSTVSSSHGGN) are compositionally biased toward low complexity. The GRAS domain occupies 196 to 554 (KRLNPGPVGI…TELVGVSAWR (359 aa)). Positions 203 to 257 (VGITEQLVKAAEVIESDTCLAQGILARLNQQLSSPVGKPLERAAFYFKEALNNLL) are leucine repeat I (LRI). The segment at 276 to 340 (YKSFSEISPV…DNAAPLSLKI (65 aa)) is VHIID. Residues 307 to 311 (LHIID) carry the VHIID motif. Residues 356-388 (FTQDNLKHFASEINISLDIQVLSLDLLGSISWP) are leucine repeat II (LRII). The segment at 396 to 479 (VAVNISAASF…RFLIQPEIEK (84 aa)) is PFYRE. Residues 482 to 554 (LDRSRPIERP…TELVGVSAWR (73 aa)) are SAW.

This sequence belongs to the GRAS family. As to quaternary structure, interacts with Meloidogyne incognita 16D10. As to expression, expressed in seedlings, roots, leaves, flowers and siliques.

The protein resides in the nucleus. In terms of biological role, probable transcription factor involved in plant development. The protein is Scarecrow-like protein 6 (SCL6) of Arabidopsis thaliana (Mouse-ear cress).